A 289-amino-acid polypeptide reads, in one-letter code: Four and a half LIM domains protein 3 (289 aa).

Serine 2 bears the N-acetylserine mark. A C4-type zinc finger spans residues 7–31 (CAKCNESLYGRKYIQTDSGPYCVPC). 2 consecutive LIM zinc-binding domains span residues 40 to 92 (CAEC…CNEC) and 101 to 153 (CSAC…CVPC). Lysine 157 bears the N6-acetyllysine mark. LIM zinc-binding domains are found at residues 162–212 (CARC…CVAC) and 221–275 (CSSC…FVPD). Position 244 is an N6-acetyllysine (lysine 244).

Interacts with SOX15; the interaction recruits FHL3 to FOXK1 promoters where it acts as a transcriptional coactivator of FOXK1. In terms of tissue distribution, expressed in myogenic progenitor cells (at protein level). Expressed in skeletal striated muscle and the heart. Expressed to a lesser extent, in lung, and kidney. Expressed in skin and skeletal muscles such as the masseter, tongue, tibialis anterior and plantar muscles.

The protein localises to the nucleus. Its subcellular location is the cytoplasm. In terms of biological role, recruited by SOX15 to FOXK1 promoters where it acts as a transcriptional coactivator of FOXK1. In Mus musculus (Mouse), this protein is Four and a half LIM domains protein 3 (Fhl3).